Here is a 179-residue protein sequence, read N- to C-terminus: Pyridoxal 5'-phosphate synthase subunit PdxT (179 aa).

An L-glutamine-binding site is contributed by 48–50 (GES). Residue cysteine 79 is the Nucleophile of the active site. Residues arginine 101 and 127-128 (IR) contribute to the L-glutamine site. Catalysis depends on charge relay system residues histidine 163 and glutamate 165.

Belongs to the glutaminase PdxT/SNO family. In the presence of PdxS, forms a dodecamer of heterodimers. Only shows activity in the heterodimer.

The catalysed reaction is aldehydo-D-ribose 5-phosphate + D-glyceraldehyde 3-phosphate + L-glutamine = pyridoxal 5'-phosphate + L-glutamate + phosphate + 3 H2O + H(+). It catalyses the reaction L-glutamine + H2O = L-glutamate + NH4(+). The protein operates within cofactor biosynthesis; pyridoxal 5'-phosphate biosynthesis. In terms of biological role, catalyzes the hydrolysis of glutamine to glutamate and ammonia as part of the biosynthesis of pyridoxal 5'-phosphate. The resulting ammonia molecule is channeled to the active site of PdxS. The sequence is that of Pyridoxal 5'-phosphate synthase subunit PdxT from Francisella tularensis subsp. novicida (strain U112).